The chain runs to 171 residues: Ribosome maturation factor RimM (171 aa).

The region spanning 96-170 (AEGEYYYHEI…LVTIHVMEGL (75 aa)) is the PRC barrel domain.

It belongs to the RimM family. Binds ribosomal protein uS19.

The protein localises to the cytoplasm. Functionally, an accessory protein needed during the final step in the assembly of 30S ribosomal subunit, possibly for assembly of the head region. Essential for efficient processing of 16S rRNA. May be needed both before and after RbfA during the maturation of 16S rRNA. It has affinity for free ribosomal 30S subunits but not for 70S ribosomes. This is Ribosome maturation factor RimM from Bacillus cereus (strain G9842).